The following is a 450-amino-acid chain: Tubulin alpha-1 chain (450 aa).

Q11 contacts GTP. At K40 the chain carries N6-acetyllysine. Positions 71, 140, 144, 145, 179, 206, and 228 each coordinate GTP. E71 lines the Mg(2+) pocket. E254 is a catalytic residue.

Belongs to the tubulin family. In terms of assembly, dimer of alpha and beta chains. A typical microtubule is a hollow water-filled tube with an outer diameter of 25 nm and an inner diameter of 15 nM. Alpha-beta heterodimers associate head-to-tail to form protofilaments running lengthwise along the microtubule wall with the beta-tubulin subunit facing the microtubule plus end conferring a structural polarity. Microtubules usually have 13 protofilaments but different protofilament numbers can be found in some organisms and specialized cells. Interacts with Ote. The cofactor is Mg(2+). Post-translationally, undergoes a tyrosination/detyrosination cycle, the cyclic removal and re-addition of a C-terminal tyrosine residue by the enzymes tubulin tyrosine carboxypeptidase (TTCP) and tubulin tyrosine ligase (TTL), respectively. In terms of processing, acetylation of alpha chains at Lys-40 stabilizes microtubules and affects affinity and processivity of microtubule motors. This modification has a role in multiple cellular functions, ranging from cell motility, cell cycle progression or cell differentiation to intracellular trafficking and signaling. During the early stages of oogenesis lky/Alpha-tubulin N-acetyltransferase 2 is the main acetyltransferase responsible for Lys-40 acetylation in germline cells while Atat/alpha-tubulin N-acetyltransferase 1 is the main acetyltransferase responsible for Lys-40 acetylation in somatic cells.

The protein localises to the cytoplasm. It localises to the cytoskeleton. It carries out the reaction GTP + H2O = GDP + phosphate + H(+). Tubulin is the major constituent of microtubules, a cylinder consisting of laterally associated linear protofilaments composed of alpha- and beta-tubulin heterodimers. Microtubules grow by the addition of GTP-tubulin dimers to the microtubule end, where a stabilizing cap forms. Below the cap, tubulin dimers are in GDP-bound state, owing to GTPase activity of alpha-tubulin. This chain is Tubulin alpha-1 chain (alphaTub84B), found in Drosophila melanogaster (Fruit fly).